The following is a 106-amino-acid chain: Gas vesicle protein J (106 aa).

The protein belongs to the gas vesicle GvpA family.

It localises to the gas vesicle. Functionally, a minor component of the gas vesicle, might be involved in nucleating gas vesicle formation. Gas vesicles are hollow, gas filled proteinaceous nanostructures found in some microorganisms. It is not clear what function gas vesicles perform in soil bacteria. The polypeptide is Gas vesicle protein J (Streptomyces sp. (strain CB03234)).